Consider the following 235-residue polypeptide: MDIKVKDFEGPLDLLLHLVSKYEVDVYQVPIVEVIEQYLAYIETLQAMRLELAGEYMLMASQLMLIKSRRLLPKLVDKEPDEEDLEQELLGKIEEYSRFKALSQELASQHDKRALLFSKPKQELIFEQAVLQKDKTVMDLFLAFSQLMAAKQEAFKYNHTVIERDDYRIEDMMELIEARLELEQELTLTDLLKHCDHLNEAITLFLASLELIKRQLVGIEQTSHFGQIVLRKEIQ.

This sequence belongs to the ScpA family. In terms of assembly, component of a cohesin-like complex composed of ScpA, ScpB and the Smc homodimer, in which ScpA and ScpB bind to the head domain of Smc. The presence of the three proteins is required for the association of the complex with DNA.

Its subcellular location is the cytoplasm. Functionally, participates in chromosomal partition during cell division. May act via the formation of a condensin-like complex containing Smc and ScpB that pull DNA away from mid-cell into both cell halves. In Streptococcus equi subsp. equi (strain 4047), this protein is Segregation and condensation protein A.